Reading from the N-terminus, the 435-residue chain is MTSLKTPKGTMDESPRQCFLHEEIIERIRRVFVLYGAVPISTPTFEMKSILTNKYGEDTKLIYDLKDQGGEICALRYDLTVPFARYLASNKIRRMKRYQIGRVYRRDQPSIARGRLREFVQADFDIAGECIQMMADAEVVSCVDRILSMFGIGEYRIKVNDRRILTSILEVVGVSCESYGTVCSTIDKIEKMSWEDIGRELVLKGLSEEQVRTTKKYMTMGGKEDVLGLLKADPVYGIERCKAAVHDMEELFRLCRILGCSGSLVMDISLARGLDYYTGMILEAEYVGKSVGSVIGGGRYDNLTENLGERCVSTPCVGFSVGVSRIFSLLYEEYDKESSTMVYVGASGGLFLDERLSVLRILQDANICSETFYTRRSSFESQQKYVAKKKIPFIVVVGESEIAAGSVQVINALTRKKEIVKVEQMVSYLLDPENQ.

It belongs to the class-II aminoacyl-tRNA synthetase family.

It localises to the cytoplasm. The enzyme catalyses tRNA(His) + L-histidine + ATP = L-histidyl-tRNA(His) + AMP + diphosphate + H(+). The protein is Probable histidine--tRNA ligase, cytoplasmic of Encephalitozoon cuniculi (strain GB-M1) (Microsporidian parasite).